A 266-amino-acid chain; its full sequence is 3-deoxy-manno-octulosonate cytidylyltransferase (266 aa).

This sequence belongs to the KdsB family.

The protein resides in the cytoplasm. The catalysed reaction is 3-deoxy-alpha-D-manno-oct-2-ulosonate + CTP = CMP-3-deoxy-beta-D-manno-octulosonate + diphosphate. The protein operates within nucleotide-sugar biosynthesis; CMP-3-deoxy-D-manno-octulosonate biosynthesis; CMP-3-deoxy-D-manno-octulosonate from 3-deoxy-D-manno-octulosonate and CTP: step 1/1. Its pathway is bacterial outer membrane biogenesis; lipopolysaccharide biosynthesis. Activates KDO (a required 8-carbon sugar) for incorporation into bacterial lipopolysaccharide in Gram-negative bacteria. This is 3-deoxy-manno-octulosonate cytidylyltransferase from Paraburkholderia xenovorans (strain LB400).